Consider the following 214-residue polypeptide: Adenylate kinase (214 aa).

10–15 is an ATP binding site; it reads GAGKGT. The tract at residues 30 to 59 is NMP; that stretch reads STGDMLRAAIKAGSELGNKAKAVMDAGQLV. Residues T31, R36, 57 to 59, 85 to 88, and Q92 contribute to the AMP site; these read QLV and GFPR. Residues 122-159 are LID; it reads GRRVHSGSGRVYHLVYNPPKVEGKDDVSGDDLSIRPDD. ATP is bound by residues R123 and 132–133; that span reads VY. AMP-binding residues include R156 and R167. ATP is bound at residue Q200.

Belongs to the adenylate kinase family. In terms of assembly, monomer.

The protein localises to the cytoplasm. The catalysed reaction is AMP + ATP = 2 ADP. Its pathway is purine metabolism; AMP biosynthesis via salvage pathway; AMP from ADP: step 1/1. Its function is as follows. Catalyzes the reversible transfer of the terminal phosphate group between ATP and AMP. Plays an important role in cellular energy homeostasis and in adenine nucleotide metabolism. The chain is Adenylate kinase from Colwellia psychrerythraea (strain 34H / ATCC BAA-681) (Vibrio psychroerythus).